Reading from the N-terminus, the 363-residue chain is 3-dehydroquinate synthase (363 aa).

NAD(+) is bound by residues D71 to K76, G105 to D109, T129 to T130, K142, K151, and C169 to T172. Residues E184, H247, and H264 each coordinate Zn(2+).

This sequence belongs to the sugar phosphate cyclases superfamily. Dehydroquinate synthase family. The cofactor is NAD(+). Requires Co(2+) as cofactor. Zn(2+) serves as cofactor.

It localises to the cytoplasm. It catalyses the reaction 7-phospho-2-dehydro-3-deoxy-D-arabino-heptonate = 3-dehydroquinate + phosphate. Its pathway is metabolic intermediate biosynthesis; chorismate biosynthesis; chorismate from D-erythrose 4-phosphate and phosphoenolpyruvate: step 2/7. Its function is as follows. Catalyzes the conversion of 3-deoxy-D-arabino-heptulosonate 7-phosphate (DAHP) to dehydroquinate (DHQ). This is 3-dehydroquinate synthase from Vibrio vulnificus (strain CMCP6).